Here is a 318-residue protein sequence, read N- to C-terminus: Olfactory receptor-like protein COR1 (318 aa).

Over 1–26 (MASGNCTTPTTFILSGLTDNPGLQMP) the chain is Extracellular. The N-linked (GlcNAc...) asparagine glycan is linked to N5. The chain crosses the membrane as a helical span at residues 27–49 (LFMVFLAIYTITLLTNLGLIALI). Residues 50 to 57 (SVDLHLQT) are Cytoplasmic-facing. A helical membrane pass occupies residues 58-79 (PMYIFLQNLSFTDAAYSTVITP). Residues 80–100 (KMLATFLEERKTISYVGCILQ) are Extracellular-facing. C97 and C179 are joined by a disulfide. Residues 101-120 (YFSFVLLTVTESLLLAVMAY) traverse the membrane as a helical segment. Topologically, residues 121–139 (DRYVAICKPLLYPSIMTKA) are cytoplasmic. The chain crosses the membrane as a helical span at residues 140–164 (VCWRLVESLYFLAFLNSLVHTSGLL). The Extracellular portion of the chain corresponds to 165–205 (KLSFCYSNVVNHFFCDISPLFQISSSSIAISELLVIISGSL). Residues 206 to 226 (FVMSSIIIILISYVFIILTVV) traverse the membrane as a helical segment. Topologically, residues 227 to 239 (MIRSKDGKYKAFS) are cytoplasmic. Residues 240-260 (TCTSHLMAVSLFHGTVIFMYL) traverse the membrane as a helical segment. Residues 261–271 (RPVKLFSLDTD) lie on the Extracellular side of the membrane. The chain crosses the membrane as a helical span at residues 272–292 (KIASLFYTVVIPMLNPLIYSW). Topologically, residues 293–318 (RNKEVKDALRRLTATTFGFIDSKAVQ) are cytoplasmic.

This sequence belongs to the G-protein coupled receptor 1 family.

Its subcellular location is the cell membrane. Functionally, odorant receptor. The protein is Olfactory receptor-like protein COR1 (COR1) of Gallus gallus (Chicken).